Here is a 65-residue protein sequence, read N- to C-terminus: Conopeptide Vt3.2 (65 aa).

An N-terminal signal peptide occupies residues 1–12 (LLFPLATLQLNA). The propeptide occupies 13–48 (DQPVERNAENIQDLNPDKRFIFMPVPRRRGPYGSVH). S64 is modified (serine amide).

Belongs to the conotoxin M superfamily. In terms of assembly, homodimer; disulfide-linked. As to expression, expressed by the venom duct.

Its subcellular location is the secreted. In Conus planorbis (Planorbis cone), this protein is Conopeptide Vt3.2.